A 468-amino-acid chain; its full sequence is UDP-N-acetylmuramate--L-alanine ligase (468 aa).

112–118 (GTHGKTT) contacts ATP.

It belongs to the MurCDEF family.

It localises to the cytoplasm. It carries out the reaction UDP-N-acetyl-alpha-D-muramate + L-alanine + ATP = UDP-N-acetyl-alpha-D-muramoyl-L-alanine + ADP + phosphate + H(+). Its pathway is cell wall biogenesis; peptidoglycan biosynthesis. Functionally, cell wall formation. This Neisseria meningitidis serogroup C (strain 053442) protein is UDP-N-acetylmuramate--L-alanine ligase.